We begin with the raw amino-acid sequence, 463 residues long: Fumarate hydratase class II (463 aa).

Residues Ser97–Thr99, Arg125, His128–Asp131, Ser138–Asn140, and Thr186 each bind substrate. A compositionally biased stretch (basic and acidic residues) spans Arg121–Asn134. The segment at Arg121–Thr142 is disordered. Catalysis depends on His187, which acts as the Proton donor/acceptor. Residue Ser317 is part of the active site. Residues Ser318 and Lys323–Asn325 contribute to the substrate site.

This sequence belongs to the class-II fumarase/aspartase family. Fumarase subfamily. Homotetramer.

The protein resides in the cytoplasm. It catalyses the reaction (S)-malate = fumarate + H2O. Its pathway is carbohydrate metabolism; tricarboxylic acid cycle; (S)-malate from fumarate: step 1/1. In terms of biological role, involved in the TCA cycle. Catalyzes the stereospecific interconversion of fumarate to L-malate. This Bordetella bronchiseptica (strain ATCC BAA-588 / NCTC 13252 / RB50) (Alcaligenes bronchisepticus) protein is Fumarate hydratase class II.